A 331-amino-acid polypeptide reads, in one-letter code: Pantothenate kinase (331 aa).

ATP is bound at residue 109 to 116 (GSVAVGKS).

It belongs to the prokaryotic pantothenate kinase family.

The protein resides in the cytoplasm. The enzyme catalyses (R)-pantothenate + ATP = (R)-4'-phosphopantothenate + ADP + H(+). Its pathway is cofactor biosynthesis; coenzyme A biosynthesis; CoA from (R)-pantothenate: step 1/5. The chain is Pantothenate kinase from Rhizobium meliloti (strain 1021) (Ensifer meliloti).